A 269-amino-acid polypeptide reads, in one-letter code: Alcohol dehydrogenase-related 31 kDa protein (269 aa).

11–34 (YVADCGGIALETCKVLMTKNIAKL) serves as a coordination point for NAD(+). Position 139 (S139) interacts with substrate. The Proton acceptor role is filled by Y152.

This sequence belongs to the short-chain dehydrogenases/reductases (SDR) family.

The protein is Alcohol dehydrogenase-related 31 kDa protein (Adhr) of Drosophila lebanonensis (Fruit fly).